A 720-amino-acid polypeptide reads, in one-letter code: Serrate RNA effector molecule (720 aa).

Disordered regions lie at residues 1-192 (MADV…NPQR), 288-335 (LNKS…FTSD), and 361-380 (ENVLQGSETEKSGREKLHSG). Residues 33–47 (SLPQQEQEQDQQQLP) show a composition bias toward low complexity. The span at 48-76 (LRRERDSRERRDERDIERPPPNRRERDRS) shows a compositional bias: basic and acidic residues. Residues serine 76, serine 90, and serine 92 each carry the phosphoserine modification. Basic residues predominate over residues 99 to 115 (DRRHSPPQRRSPPQKRY). Composition is skewed to basic and acidic residues over residues 116–126 (RRDDNGYDGRR) and 136–164 (PDRRFGYDHGGGYDREMGGRPGYGDERPH). Positions 288–297 (LNKSGRTSEP) are enriched in polar residues. Positions 368–378 (ETEKSGREKLH) are enriched in basic and acidic residues. The C2H2-type zinc finger occupies 498-523 (YGCGAKGCTKLFHAAEFVYKHLKLKH). Disordered regions lie at residues 543-622 (YMND…AFGG) and 666-687 (RDPSGPNPPFEGSGRGGPAPFL). The span at 570-607 (PSMENRLRDDRGGRRERDGRANGNDRNDRSEDQQRGDN) shows a compositional bias: basic and acidic residues. The span at 608–622 (DGGNPGEVGYDAFGG) shows a compositional bias: gly residues. Serine 689 carries the post-translational modification Phosphoserine.

This sequence belongs to the ARS2 family. As to quaternary structure, interacts with HYL1. Interacts with RCF3, RS40 and RS41. As to expression, expressed in shoot meristems and in emerging organ primordia throughout development.

It is found in the nucleus. Its subcellular location is the nucleus speckle. Functionally, acts as a mediator between the cap-binding complex (CBC) and both the pre-mRNA splicing and primary microRNAs (miRNAs) processing machinery. Required for proper processing of primary miRNAs to miRNAs, thereby playing a role in RNA-mediated gene silencing (RNAi) by miRNAs. Does not participate in sense post-transcriptional gene silencing. Acts as a regulator of meristem activity and adaxial leaf fate via the miRNA gene-silencing pathway by regulating the expression of PHB and by limiting the competence of shoot tissue to respond to KNOX expression. Its function is however not limited to miRNA-mediated repression of leaf polarity genes, but rather acts as a general regulator of primary microRNAs processing. Also critical for the accumulation of the trans-acting small interfering RNA (ta-siRNA). Required for pre-mRNA splicing. This Arabidopsis thaliana (Mouse-ear cress) protein is Serrate RNA effector molecule (SE).